The following is a 539-amino-acid chain: F-box/WD-40 repeat-containing protein At5g21040 (539 aa).

The F-box domain occupies 65–111; the sequence is STTIIDLPQALISEILNCLDPKELGLVSCVSTYLHRLASEHHAWKEF. 7 WD repeats span residues 160-199, 201-239, 255-292, 294-330, 334-373, 382-419, and 433-477; these read GHTEAVRTVFLLASAKLVFTSGYDSIVRMWDMEEGLSIAA, KPLGCTIRALAADTKLLVAGGTDGFIHCWKSLDGLRNLF, GHEGPITSLALDMTSIFSGSWDMSVRIWDRSSMKCVKT, RHSDWVWGLAPHETTLASTSGSDVYIWDVSSETPLAI, AHEGTTYSLARSHTGDFLFTGGEDGGIKMFEIRRYGSETS, PHTSPVYSLSFEFPWLVSASGDGKLALIDVRKLLKTNR, and PPQR…EIER. A disordered region spans residues 505 to 539; it reads GRPDQCSIAAHKNPINGERNRAWHSKRRASGKAKA. Over residues 526–539 the composition is skewed to basic residues; it reads AWHSKRRASGKAKA.

This Arabidopsis thaliana (Mouse-ear cress) protein is F-box/WD-40 repeat-containing protein At5g21040.